Reading from the N-terminus, the 169-residue chain is Small proline-rich protein 3 (169 aa).

Over residues Met1–Pro24 the composition is skewed to low complexity. The interval Met1 to Gly57 is disordered. The residue at position 2 (Ser2) is an N-acetylserine. Tandem repeats lie at residues Ser43–Asn50, Thr51–Cys58, Thr59–Cys66, Thr67–Cys74, Thr75–Cys82, Thr83–Cys90, Thr91–Cys98, Thr99–Tyr106, Thr107–Ser114, Ile115–Phe122, Ile123–Ala130, Ile131–Tyr138, Thr139–Tyr146, and Thr147–Pro154. Residues Ser43 to Pro154 form a 14 X 8 AA approximate tandem repeats region. Positions Pro150 to Lys169 are disordered. The segment covering Ser155 to Lys169 has biased composition (polar residues).

The protein resides in the cytoplasm. In terms of biological role, cross-linked envelope protein of keratinocytes. This is Small proline-rich protein 3 (SPRR3) from Homo sapiens (Human).